A 217-amino-acid polypeptide reads, in one-letter code: Translation initiation factor IF-3 (217 aa).

The interval 179–217 (PRKTPLVKKEEKEAAPTKAVRTIPAPPRPTAAKVAAQQA) is disordered.

Belongs to the IF-3 family. As to quaternary structure, monomer.

The protein localises to the cytoplasm. IF-3 binds to the 30S ribosomal subunit and shifts the equilibrium between 70S ribosomes and their 50S and 30S subunits in favor of the free subunits, thus enhancing the availability of 30S subunits on which protein synthesis initiation begins. The sequence is that of Translation initiation factor IF-3 from Parasynechococcus marenigrum (strain WH8102).